Consider the following 253-residue polypeptide: Complement C1q subcomponent subunit B (253 aa).

Residues 1–27 (MMMKIPWGSIPVLMLLLLLGLIDISQA) form the signal peptide. Pyrrolidone carboxylic acid is present on Q28. A 4-hydroxyproline mark is found at P35, P38, P41, P53, and P56. Collagen-like domains are found at residues 37–86 (IPGI…PGNP) and 60–114 (GEKG…GESG). Residues 38-115 (PGIPGIPGTP…APGPKGESGD (78 aa)) form a disordered region. Residues K59 and K62 each carry the 5-hydroxylysine modification. P65 is subject to 4-hydroxyproline. The segment covering 70 to 79 (DHGEFGEKGD) has biased composition (basic and acidic residues). K77 is subject to 5-hydroxylysine. The span at 80–92 (PGIPGNPGKVGPK) shows a compositional bias: low complexity. 4-hydroxyproline is present on residues P83 and P86. Residues K92 and K98 each carry the 5-hydroxylysine modification. The span at 96–105 (GPKGGPGAPG) shows a compositional bias: gly residues. P101, P104, and P107 each carry 4-hydroxyproline. A 5-hydroxylysine modification is found at K110. The C1q domain occupies 117–253 (KATQKIAFSA…GFLLFPDMEA (137 aa)). Cysteines 181 and 198 form a disulfide. The Ca(2+) site is built by D199, Y200, and Q206.

In terms of assembly, core component of the complement C1 complex, a calcium-dependent complex composed of 1 molecule of the C1Q subcomplex, 2 molecules of C1R and 2 molecules of C1S. The C1Q subcomplex is composed 18 subunits: 3 chains of C1QA, C1QB, and C1QC trimerize to form 6 collagen-like triple helices connected to six globular ligand-recognition modules (C1q domain). Post-translationally, hydroxylated on lysine and proline residues. Hydroxylated lysine residues can be glycosylated. Human C1Q contains up to 68.3 hydroxylysine-galactosylglucose residues and up to 2.5 hydroxylysine-galactose per molecule. Total percentage hydroxylysine residues glycosylated is 86.4%.

Its subcellular location is the secreted. It localises to the cell surface. With respect to regulation, the C1Q subcomplex is inhibited by sulfated molecules, such as triterpenoid sulfates, heparan sulfate, or chondroitin sulfates. Its function is as follows. Core component of the complement C1 complex, a multiprotein complex that initiates the classical pathway of the complement system, a cascade of proteins that leads to phagocytosis and breakdown of pathogens and signaling that strengthens the adaptive immune system. The classical complement pathway is initiated by the C1Q subcomplex of the C1 complex, which specifically binds IgG or IgM immunoglobulins complexed with antigens, forming antigen-antibody complexes on the surface of pathogens: C1QA, together with C1QB and C1QC, specifically recognizes and binds the Fc regions of IgG or IgM via its C1q domain. Immunoglobulin-binding activates the proenzyme C1R, which cleaves C1S, initiating the proteolytic cascade of the complement system. The C1Q subcomplex is activated by a hexamer of IgG complexed with antigens, while it is activated by a pentameric IgM. The C1Q subcomplex also recognizes and binds phosphatidylserine exposed on the surface of cells undergoing programmed cell death, possibly promoting activation of the complement system. The chain is Complement C1q subcomponent subunit B from Homo sapiens (Human).